The following is a 453-amino-acid chain: Bifunctional protein GlmU (453 aa).

The interval 1-225 (MNIVILAAGT…EWETLGVNSK (225 aa)) is pyrophosphorylase. UDP-N-acetyl-alpha-D-glucosamine is bound by residues 6–9 (LAAG), Lys20, Gln71, 76–77 (GT), 98–100 (YGD), Gly135, Glu150, Asn165, and Asn223. Asp100 contacts Mg(2+). Asn223 is a binding site for Mg(2+). The interval 226–246 (QQLAELERIHQHNVADALLVA) is linker. The N-acetyltransferase stretch occupies residues 247–453 (GVTLADPARL…GYVRPTKKKS (207 aa)). The UDP-N-acetyl-alpha-D-glucosamine site is built by Arg329 and Lys347. Residue His359 is the Proton acceptor of the active site. Residues Tyr362 and Asn373 each coordinate UDP-N-acetyl-alpha-D-glucosamine. Residues Ala376, 382–383 (NY), Ser401, and Ala419 contribute to the acetyl-CoA site.

It in the N-terminal section; belongs to the N-acetylglucosamine-1-phosphate uridyltransferase family. This sequence in the C-terminal section; belongs to the transferase hexapeptide repeat family. As to quaternary structure, homotrimer. The cofactor is Mg(2+).

Its subcellular location is the cytoplasm. The enzyme catalyses alpha-D-glucosamine 1-phosphate + acetyl-CoA = N-acetyl-alpha-D-glucosamine 1-phosphate + CoA + H(+). It catalyses the reaction N-acetyl-alpha-D-glucosamine 1-phosphate + UTP + H(+) = UDP-N-acetyl-alpha-D-glucosamine + diphosphate. The protein operates within nucleotide-sugar biosynthesis; UDP-N-acetyl-alpha-D-glucosamine biosynthesis; N-acetyl-alpha-D-glucosamine 1-phosphate from alpha-D-glucosamine 6-phosphate (route II): step 2/2. It participates in nucleotide-sugar biosynthesis; UDP-N-acetyl-alpha-D-glucosamine biosynthesis; UDP-N-acetyl-alpha-D-glucosamine from N-acetyl-alpha-D-glucosamine 1-phosphate: step 1/1. It functions in the pathway bacterial outer membrane biogenesis; LPS lipid A biosynthesis. In terms of biological role, catalyzes the last two sequential reactions in the de novo biosynthetic pathway for UDP-N-acetylglucosamine (UDP-GlcNAc). The C-terminal domain catalyzes the transfer of acetyl group from acetyl coenzyme A to glucosamine-1-phosphate (GlcN-1-P) to produce N-acetylglucosamine-1-phosphate (GlcNAc-1-P), which is converted into UDP-GlcNAc by the transfer of uridine 5-monophosphate (from uridine 5-triphosphate), a reaction catalyzed by the N-terminal domain. This Paraburkholderia phytofirmans (strain DSM 17436 / LMG 22146 / PsJN) (Burkholderia phytofirmans) protein is Bifunctional protein GlmU.